The sequence spans 641 residues: MPILEKVPPKMPVQASSCEEVLDLPKLPVPPLQQTLATYLQCMQHLVPEEQFRKSQAIVKRFGAPGGLGETLQEKLLERQEKTANWVSEYWLNDMYLNNRLALPVNSSPAVIFARQHFQDTNDQLRFAASLISGVLSYKALLDSQSIPTDWAKGQLSGQPLCMKQYYRLFSSYRLPGHTQDTLVAQKSSIMPEPEHVIVACCNQFFVLDVVINFRRLSEGDLFTQLRKIVKMASNEDERLPPIGLLTSDGRSEWAKARTVLLKDSTNRDSLDMIERCICLVCLDGPGTGDLSDTHRALQLLHGGGCSLNGANRWYDKSLQFVVGRDGTCGVVCEHSPFDGIVLVQCTEHLLKHMMTGNKKLVRVDSVSELPAPRRLRWKCSPETQGHLASSAEKLQRIVKNLDFIVYKFDNYGKTFIKKQKCSPDGFIQVALQLAYYRLYQRLVPTYESASIRRFQEGRVDNIRSATPEALAFVQAMTDHKAAVLASEKLQLLQRAIQAQTEYTVMAITGMAIDNHLLALRELARDLCKEPPEMFMDETYLMSNRFILSTSQVPTTMEMFCCYGPVVPNGYGACYNPHAEAITFCISSFHGCKETSSVEFAEAVGASLVDMRDLCSSRQPADSKPPTAKERARGPSQAKQS.

The residue at position 17 (Ser17) is a Phosphoserine. His335 acts as the Proton acceptor in catalysis. At Ser366 the chain carries Phosphoserine. CoA is bound by residues 413-425, Ser451, and Gln552; that span reads GKTF…CSPD. The interval 615–641 is disordered; it reads CSSRQPADSKPPTAKERARGPSQAKQS.

This sequence belongs to the carnitine/choline acetyltransferase family.

It catalyses the reaction choline + acetyl-CoA = acetylcholine + CoA. Catalyzes the reversible synthesis of acetylcholine (ACh) from acetyl CoA and choline at cholinergic synapses. The protein is Choline O-acetyltransferase (Chat) of Mus musculus (Mouse).